A 235-amino-acid polypeptide reads, in one-letter code: BPI fold-containing family A member 2 (235 aa).

A signal peptide spans 1-20 (MFQLGSLVVLCGLLIGNSES). The cysteines at positions 161 and 204 are disulfide-linked.

Belongs to the BPI/LBP/Plunc superfamily. Plunc family. Predominates in the parotid glands, present in smaller amounts (1/10) in the submaxillary glands and in the sublingual glands, and at lower amount in the pancreas but undetectable in the liver. Found also in lacrimal gland.

It is found in the secreted. In terms of biological role, has strong antibacterial activity against P.aeruginosa. This is BPI fold-containing family A member 2 (Bpifa2) from Mus musculus (Mouse).